The following is a 489-amino-acid chain: WD repeat-containing protein JIP5 (489 aa).

Residues 4 to 45 (PLSSDALDLCFHPAAETNLLAVGLISGKIQLINYDDYLSSPS) form a WD 1 repeat. Residues 46-66 (SSRTPLAPPSKKSKPSTISSA) form a disordered region. One copy of the WD 2 repeat lies at 124 to 163 (EVHDAAPSRVLPVDESLVVTGDDDGVVRLWDVRKGGGKGI). Residues 192 to 246 (SIKEAKKSKTQLKKQRRRARQAERLKEHDKEKREQNASDTEASEPDSEDDAAIKV) are disordered. Basic residues predominate over residues 199-210 (SKTQLKKQRRRA). Basic and acidic residues predominate over residues 211–227 (RQAERLKEHDKEKREQN). The span at 232 to 241 (EASEPDSEDD) shows a compositional bias: acidic residues. WD repeat units follow at residues 279–318 (DQED…LDHV) and 323–363 (GHPA…GVIA). The segment at 417–489 (IVGLAEDDSD…AGKGGFFSDL (73 aa)) is disordered. 2 stretches are compositionally biased toward acidic residues: residues 421-440 (AEDD…DDDD) and 449-472 (DGAE…DSED).

Belongs to the WD repeat WDR55 family.

The protein localises to the nucleus. It localises to the nucleolus. This chain is WD repeat-containing protein JIP5 (JIP5), found in Mycosarcoma maydis (Corn smut fungus).